A 225-amino-acid polypeptide reads, in one-letter code: Ribonuclease 3 (225 aa).

An RNase III domain is found at 5-127 (LERLQRQIGY…IIGAISLDSD (123 aa)). Glu-40 contributes to the Mg(2+) binding site. The active site involves Asp-44. Mg(2+) contacts are provided by Asp-113 and Glu-116. Glu-116 is a catalytic residue. Residues 154–224 (DPKTRLQEYL…AEKILQLLEM (71 aa)) enclose the DRBM domain.

Belongs to the ribonuclease III family. Homodimer. The cofactor is Mg(2+).

The protein resides in the cytoplasm. The enzyme catalyses Endonucleolytic cleavage to 5'-phosphomonoester.. Functionally, digests double-stranded RNA. Involved in the processing of primary rRNA transcript to yield the immediate precursors to the large and small rRNAs (23S and 16S). Also processes some mRNAs, and tRNAs when they are encoded in the rRNA operon. Its function is as follows. CRISPR (clustered regularly interspaced short palindromic repeat) is an adaptive immune system that provides protection against mobile genetic elements (viruses, transposable elements and conjugative plasmids). CRISPR clusters contain spacers, sequences complementary to antecedent mobile elements, and target invading nucleic acids. CRISPR clusters are transcribed and processed into CRISPR RNA (crRNA). In this organism endogenous ribonuclease 3 and Cas9 are required for correct coprocessing of pre-crRNA and the trans-encoded small RNA (tracrRNA). Cas9, crRNA and tracrRNA are required for cleavage of invading DNA. Complements pre-crRNA and tracrRNA coprocessing defects in an rnc deletion in S.pyogenes strain 370. The protein is Ribonuclease 3 of Pasteurella multocida (strain Pm70).